Reading from the N-terminus, the 81-residue chain is UPF0729 protein C18orf32 homolog (81 aa).

Over residues 45–58 (AASDQKVSEKSNGT) the composition is skewed to polar residues. A disordered region spans residues 45-81 (AASDQKVSEKSNGTCKPESNGEATANGSTIAADKKTD).

It belongs to the UPF0729 family.

This Anoplopoma fimbria (Sablefish) protein is UPF0729 protein C18orf32 homolog.